The primary structure comprises 932 residues: Protocadherin gamma-A7 (932 aa).

An N-terminal signal peptide occupies residues methionine 1–alanine 28. Cadherin domains lie at glycine 29–phenylalanine 133, leucine 134–phenylalanine 242, serine 243–valine 347, threonine 348–phenylalanine 452, proline 453–isoleucine 562, and aspartate 570–aspartate 682. Over glycine 29–tyrosine 692 the chain is Extracellular. 2 N-linked (GlcNAc...) asparagine glycosylation sites follow: asparagine 419 and asparagine 545. A helical membrane pass occupies residues leucine 693–alanine 713. The Cytoplasmic portion of the chain corresponds to leucine 714–lysine 932. Disordered regions lie at residues proline 805–asparagine 841 and alanine 902–lysine 932. Over residues asparagine 922–lysine 932 the composition is skewed to basic residues.

It localises to the cell membrane. Its function is as follows. Potential calcium-dependent cell-adhesion protein. May be involved in the establishment and maintenance of specific neuronal connections in the brain. The protein is Protocadherin gamma-A7 (PCDHGA7) of Homo sapiens (Human).